Reading from the N-terminus, the 333-residue chain is Methylosome protein WDR77 (333 aa).

WD repeat units lie at residues C16–N59, Q68–V106, E113–S152, A155–R195, C199–T240, V243–D283, and S285–A328.

Heterotetramer; dimer of heterodimer with prmt5. Interacts with histone h2a and h4 and with nucleoplasmin. In terms of tissue distribution, detected in egg (at protein level).

It is found in the cytoplasm. The protein localises to the nucleus. Non-catalytic component of the 20S prmt5-containing methyltransferase complex, which modifies specific arginines to dimethylarginines in several spliceosomal Sm proteins and histones. Required for normal prmt5 methyltransferase activity. This Xenopus laevis (African clawed frog) protein is Methylosome protein WDR77.